The chain runs to 438 residues: MNGELSFKYDNVMEENLGNLGISNGKLESFNNESSKIIEILKEKELNGEFGFLDVLNDNLDKYYELNEYSKNFENILIIGIGGSNLGLRAAETGILGSFTSRYEIPRIYYMDNSDPEKTHDILSNIDLEKTLVFVISKSGNTVETLANFFIVRNLMKKKNIDLEKHVVSITSGGELEKITKKENYIHFEVPENVGGRFSVLSSVGIAPLSCTSVDIKKLIDGAKSIEKSCKCEDIFKNPALMNAVIHKLMYNRGKTVSVMMPYIERLRSFGMWYGQLWAESLGKNGFGQTPVIAVGATSQHSQLQLYMDGPNDKIATFLKVNKYRNDLKIEYEYDHHLSGHNLSEVITSELVGTENSMKHNNIPNVKITLSKLNEITMGKLFLMYEMQTAISGELYGINAFDQPAVEYGKKIAHECLTGSKVDSENKYINGKYIITSK.

E280 serves as the catalytic Proton donor. Residues H301 and K410 contribute to the active site.

This sequence belongs to the GPI family.

It is found in the cytoplasm. The enzyme catalyses alpha-D-glucose 6-phosphate = beta-D-fructose 6-phosphate. It participates in carbohydrate biosynthesis; gluconeogenesis. It functions in the pathway carbohydrate degradation; glycolysis; D-glyceraldehyde 3-phosphate and glycerone phosphate from D-glucose: step 2/4. Functionally, catalyzes the reversible isomerization of glucose-6-phosphate to fructose-6-phosphate. The protein is Probable glucose-6-phosphate isomerase of Methanococcus maripaludis (strain DSM 14266 / JCM 13030 / NBRC 101832 / S2 / LL).